A 220-amino-acid chain; its full sequence is Protein myomaker (220 aa).

Position 1 (Met1) is a topological domain, extracellular. The chain crosses the membrane as a helical span at residues 2 to 22 (GAFIAKMLLPTISSLVFVPAA). Topologically, residues 23-37 (SVAAKRGFHMEAMVY) are cytoplasmic. Residues 38-58 (FFTMFFTAIYHACDGPGLSIL) traverse the membrane as a helical segment. The Extracellular segment spans residues 59-64 (CFMKYD). A helical membrane pass occupies residues 65–85 (ILEYFSVYGTAISMWVTLLAL). The Cytoplasmic portion of the chain corresponds to 86–93 (GDFDEPKR). The helical transmembrane segment at 94-110 (SSLTMFGVLTAAVRIYQ) threads the bilayer. Topologically, residues 111 to 112 (DR) are extracellular. A helical membrane pass occupies residues 113 to 133 (LGYGIYSGPIGTAVFMITVKW). Residues 134–153 (LQKMKEKKGLYPDKSVYTQQ) are Cytoplasmic-facing. A helical membrane pass occupies residues 154–174 (VGPGCCFGALALMLRFYFEEW). Asp175 is a topological domain (extracellular). A helical transmembrane segment spans residues 176–196 (YAYVHSFYHVSLAMSFILLLP). Residues 197 to 220 (KKNRYAGTGRNAAKLNCYTLCCCV) are Cytoplasmic-facing.

It belongs to the TMEM8 family.

It localises to the cell membrane. Myoblast-specific protein that mediates myoblast fusion, an essential step for the formation of multi-nucleated muscle fibers. Actively participates in the membrane fusion reaction by mediating the mixing of cell membrane lipids (hemifusion) upstream of mymx. The polypeptide is Protein myomaker (Danio rerio (Zebrafish)).